The following is a 365-amino-acid chain: Chorismate synthase (365 aa).

Positions 48 and 54 each coordinate NADP(+). FMN contacts are provided by residues 131–133, 243–244, Gly-288, 303–307, and Arg-329; these read RSS, NA, and KPTSS.

Belongs to the chorismate synthase family. Homotetramer. Requires FMNH2 as cofactor.

The enzyme catalyses 5-O-(1-carboxyvinyl)-3-phosphoshikimate = chorismate + phosphate. It participates in metabolic intermediate biosynthesis; chorismate biosynthesis; chorismate from D-erythrose 4-phosphate and phosphoenolpyruvate: step 7/7. Functionally, catalyzes the anti-1,4-elimination of the C-3 phosphate and the C-6 proR hydrogen from 5-enolpyruvylshikimate-3-phosphate (EPSP) to yield chorismate, which is the branch point compound that serves as the starting substrate for the three terminal pathways of aromatic amino acid biosynthesis. This reaction introduces a second double bond into the aromatic ring system. The sequence is that of Chorismate synthase from Rhizobium etli (strain CIAT 652).